Reading from the N-terminus, the 540-residue chain is Membrane protein insertase YidC (540 aa).

The helical transmembrane segment at 6–26 (NILLIALALVSFLLFQQWQVA) threads the bilayer. Positions 36–63 (QAQSSSTLPAPSFADELDPVPGQQQASA) are disordered. The next 4 helical transmembrane spans lie at 342 to 362 (AFIQ…TFIV), 417 to 437 (LGGC…YWAL), 455 to 475 (LSAQ…MFLI), and 496 to 516 (PVMF…YWLV).

It belongs to the OXA1/ALB3/YidC family. Type 1 subfamily. In terms of assembly, interacts with the Sec translocase complex via SecD. Specifically interacts with transmembrane segments of nascent integral membrane proteins during membrane integration.

It is found in the cell inner membrane. In terms of biological role, required for the insertion and/or proper folding and/or complex formation of integral membrane proteins into the membrane. Involved in integration of membrane proteins that insert both dependently and independently of the Sec translocase complex, as well as at least some lipoproteins. Aids folding of multispanning membrane proteins. The chain is Membrane protein insertase YidC from Vibrio campbellii (strain ATCC BAA-1116).